We begin with the raw amino-acid sequence, 621 residues long: Solute carrier family 2, facilitated glucose transporter member 12 (621 aa).

Residues 1-48 lie on the Cytoplasmic side of the membrane; sequence MVPVENTEGPNLLNQKGTAVETEGSYRASGSRHPPWARGCGMFTFLSS. A helical transmembrane segment spans residues 49-69; that stretch reads VTAAVSGLLVGYELGIISGAL. Over 70 to 84 the chain is Extracellular; that stretch reads LQIKTLLTLSCHEQE. A helical membrane pass occupies residues 85–105; the sequence is MVVSSLLIGALLASLTGGVLI. Over 106 to 119 the chain is Cytoplasmic; the sequence is DRYGRRTAIILSSC. Residues 120–140 traverse the membrane as a helical segment; that stretch reads LLGLGSLVLILSLSYTVLIVG. A topological domain (extracellular) is located at residue Arg141. Residues 142-162 form a helical membrane-spanning segment; it reads IAIGVSISLSSIATCVYIAEI. Residues 163 to 176 are Cytoplasmic-facing; it reads APQHRRGLLVSLNE. A helical membrane pass occupies residues 177–197; it reads LMIVIGILSAYISNYAFANVF. Residues 198–201 lie on the Extracellular side of the membrane; that stretch reads HGWK. The chain crosses the membrane as a helical span at residues 202 to 222; it reads YMFGLVIPLGILQAIAMYFLP. The Cytoplasmic portion of the chain corresponds to 223 to 282; that stretch reads PSPRFLVMKGQEGAASKVLGRLRALSDATEELTVIKSSLKDEYQYSFWDLFRSKDNMRTR. The chain crosses the membrane as a helical span at residues 283-303; sequence IMIGLTLVFFVQITGQPNILF. Topologically, residues 304 to 321 are extracellular; the sequence is YASTVLKSVGFQSNEAAS. The chain crosses the membrane as a helical span at residues 322–342; sequence LASTGVGVVKVISTIPATLLV. Topologically, residues 343 to 349 are cytoplasmic; the sequence is DHVGSKT. The chain crosses the membrane as a helical span at residues 350-370; it reads FLCIGSSVMAASLVTMGIVNL. Residues 371–470 lie on the Extracellular side of the membrane; the sequence is NIHMNFTNIC…PAFLKWLSLA (100 aa). Asn375, Asn387, Asn400, and Asn405 each carry an N-linked (GlcNAc...) asparagine glycan. Residues 471–491 form a helical membrane-spanning segment; the sequence is SLLVYVAAFSIGLGPMPWLVL. Over 492-502 the chain is Cytoplasmic; the sequence is SEIFPGGIRGR. Residues 503–523 traverse the membrane as a helical segment; it reads AMALTSSMNWGINLLISLTFL. Topologically, residues 524–532 are extracellular; sequence TVTDLIGLP. The helical transmembrane segment at 533-553 threads the bilayer; the sequence is WVCFIYTIMSLASLLFVVMFI. Over 554–621 the chain is Cytoplasmic; that stretch reads PETKGCSLEQ…GQSRQLSPEN (68 aa).

It belongs to the major facilitator superfamily. Sugar transporter (TC 2.A.1.1) family. Glucose transporter subfamily.

The protein resides in the cell membrane. Its subcellular location is the endomembrane system. The protein localises to the cytoplasm. It is found in the perinuclear region. The enzyme catalyses D-glucose(out) = D-glucose(in). Its function is as follows. Insulin-independent facilitative glucose transporter. This Macaca fascicularis (Crab-eating macaque) protein is Solute carrier family 2, facilitated glucose transporter member 12.